Reading from the N-terminus, the 1134-residue chain is Phospholipid-transporting ATPase IH (1134 aa).

Residues 1-61 (MDCSLVRTLV…SSKYTFWNFI (61 aa)) lie on the Cytoplasmic side of the membrane. The chain crosses the membrane as a helical span at residues 62–82 (PKNLFEQFRRVANFYFLIIFL). Residues 83 to 88 (VQLIID) lie on the Extracellular side of the membrane. Residues 89-110 (TPTSPVTSGLPLFFVITVTAIK) form a helical membrane-spanning segment. The Cytoplasmic portion of the chain corresponds to 111-296 (QGYEDWLRHK…SAVEKSMNAF (186 aa)). Residues 297 to 318 (LIVYLCILISKALINTVLKYMW) form a helical membrane-spanning segment. Residues 319-349 (QSEPFRDEPWYNQKTESERQRNLFLKAFTDF) are Extracellular-facing. Residues 350-372 (LAFMVLFNYIIPVSMYVTVEMQK) form a helical membrane-spanning segment. Topologically, residues 373 to 881 (FLGSYFITWD…GHFYYIRISE (509 aa)) are cytoplasmic. D414 functions as the 4-aspartylphosphate intermediate in the catalytic mechanism. ATP is bound by residues D414, K415, T416, E511, F553, K576, R607, T687, G688, and D689. D414 contributes to the Mg(2+) binding site. T416 is a Mg(2+) binding site. S738 carries the phosphoserine modification. ATP contacts are provided by R798 and K804. A Mg(2+)-binding site is contributed by D825. N828 and D829 together coordinate ATP. Residue D829 coordinates Mg(2+). A helical transmembrane segment spans residues 882-902 (LVQYFFYKNVCFIFPQFLYQF). Topologically, residues 903-914 (FCGFSQQTLYDT) are extracellular. The chain crosses the membrane as a helical span at residues 915-934 (AYLTLYNISFTSLPILLYSL). Over 935–964 (MEQHVGIDVLKRDPTLYRDVAKNALLRWRV) the chain is Cytoplasmic. Residues 965-986 (FIYWTLLGLFDALVFFFGAYFV) form a helical membrane-spanning segment. Residues 987–1000 (FENTTVTSNGQIFG) lie on the Extracellular side of the membrane. A helical membrane pass occupies residues 1001–1023 (NWTFGTLVFTVMVFTVTLKLALD). At 1024–1029 (THYWTW) the chain is on the cytoplasmic side. A helical transmembrane segment spans residues 1030-1050 (INHFVIWGSLLFYVVFSLLWG). Residues 1051–1068 (GVIWPFLNYQRMYYVFIQ) lie on the Extracellular side of the membrane. The chain crosses the membrane as a helical span at residues 1069 to 1093 (MLSSGPAWLAIVLLVTISLLPDVLK). Over 1094–1134 (KVLCRQLWPTATERVQTKSQCLSVEQSTIFMLSQTSSSLSF) the chain is Cytoplasmic.

This sequence belongs to the cation transport ATPase (P-type) (TC 3.A.3) family. Type IV subfamily. In terms of assembly, component of a P4-ATPase flippase complex which consists of a catalytic alpha subunit ATP11A and an accessory beta subunit TMEM30A. Mg(2+) serves as cofactor. In terms of processing, proteolytically cleaved by CASP3. As to expression, widely expressed. Expressed in myoblasts.

It localises to the cell membrane. Its subcellular location is the early endosome. The protein resides in the recycling endosome. The protein localises to the endoplasmic reticulum membrane. The enzyme catalyses ATP + H2O + phospholipidSide 1 = ADP + phosphate + phospholipidSide 2.. It carries out the reaction a 1,2-diacyl-sn-glycero-3-phospho-L-serine(out) + ATP + H2O = a 1,2-diacyl-sn-glycero-3-phospho-L-serine(in) + ADP + phosphate + H(+). It catalyses the reaction a 1,2-diacyl-sn-glycero-3-phosphoethanolamine(out) + ATP + H2O = a 1,2-diacyl-sn-glycero-3-phosphoethanolamine(in) + ADP + phosphate + H(+). The flippase activity is inactivated by caspase-mediated cleavage in apoptotic cells, allowing for PS exposure on the cell surface and engulfment of apoptotic cells by macrophages. The ATPase activity is up-regulated by aminophospholipids PS and PE and down-regulated by increasing intracellular Ca2+ levels. Functionally, catalytic component of a P4-ATPase flippase complex which catalyzes the hydrolysis of ATP coupled to the transport of aminophospholipids, phosphatidylserines (PS) and phosphatidylethanolamines (PE), from the outer to the inner leaflet of the plasma membrane. Does not show flippase activity toward phosphatidylcholine (PC). Contributes to the maintenance of membrane lipid asymmetry with a specific role in morphogenesis of muscle cells. In myoblasts, mediates PS enrichment at the inner leaflet of plasma membrane, triggering PIEZO1-dependent Ca2+ influx and Rho GTPases signal transduction, subsequently leading to the assembly of cortical actomyosin fibers and myotube formation. May be involved in the uptake of farnesyltransferase inhibitor drugs, such as lonafarnib. The polypeptide is Phospholipid-transporting ATPase IH (ATP11A) (Homo sapiens (Human)).